A 677-amino-acid polypeptide reads, in one-letter code: Membrane-associated tyrosine- and threonine-specific cdc2-inhibitory kinase wee-1.3 (677 aa).

Residues 1–22 show a composition bias toward polar residues; it reads MDDTEGNSSMDSIRNGQSSPLP. Residues 1–30 are disordered; the sequence is MDDTEGNSSMDSIRNGQSSPLPQVTPRLPQ. The region spanning 108–355 is the Protein kinase domain; it reads FQIDEIIGRG…SRDLLDHPVI (248 aa). ATP is bound by residues 114-122 and Lys137; that span reads IGRGSFGEV. The Proton acceptor role is filled by Asp228. 2 residues coordinate Mg(2+): Asn233 and Asp246. Disordered regions lie at residues 478–526 and 632–677; these read FDND…GTPR and EPSN…GDEV. A compositionally biased stretch (polar residues) spans 489–499; sequence ATCSSSNSSAI. Residues 638-652 show a composition bias toward basic and acidic residues; that stretch reads TVDHHTILEQSESPR.

The protein belongs to the protein kinase superfamily. Ser/Thr protein kinase family. WEE1 subfamily.

It localises to the golgi apparatus membrane. Its subcellular location is the cytoplasm. It catalyses the reaction L-seryl-[protein] + ATP = O-phospho-L-seryl-[protein] + ADP + H(+). The catalysed reaction is L-threonyl-[protein] + ATP = O-phospho-L-threonyl-[protein] + ADP + H(+). In terms of biological role, acts as a negative regulator of entry into mitosis (G2 to M transition) by phosphorylation of the CDK1 kinase during oocyte maturation. Required for oocyte maturation, embryonic development, germline proliferation and initiation of meiosis during spermatogenesis. Required for chromosome structure during mitosis and negative regulation of nuclear envelope breakdown. The protein is Membrane-associated tyrosine- and threonine-specific cdc2-inhibitory kinase wee-1.3 (wee-1.3) of Caenorhabditis elegans.